We begin with the raw amino-acid sequence, 159 residues long: Phosphopantetheine adenylyltransferase (159 aa).

Thr-10 contributes to the substrate binding site. ATP-binding positions include 10–11 (TF) and His-18. Lys-42, Met-74, and Arg-88 together coordinate substrate. ATP contacts are provided by residues 89-91 (GLR), Glu-99, and 124-130 (WSFISSS).

The protein belongs to the bacterial CoaD family. As to quaternary structure, homohexamer. Requires Mg(2+) as cofactor.

The protein resides in the cytoplasm. It catalyses the reaction (R)-4'-phosphopantetheine + ATP + H(+) = 3'-dephospho-CoA + diphosphate. The protein operates within cofactor biosynthesis; coenzyme A biosynthesis; CoA from (R)-pantothenate: step 4/5. In terms of biological role, reversibly transfers an adenylyl group from ATP to 4'-phosphopantetheine, yielding dephospho-CoA (dPCoA) and pyrophosphate. The protein is Phosphopantetheine adenylyltransferase of Escherichia coli (strain UTI89 / UPEC).